The sequence spans 424 residues: MRILGLITEYNPFHNGHLHHLQESKKISKSTHTVAVMSGHFLQRGEPALIHKWARAQMAVDAGVDLVLELPTLYACASAEFFSHGAVSILNQMGVVDALCFGSELGHIEALKQVATVLINSPESFEISLKKYLQEGIAFPKARSKALIDHFSLEDLSSYGMTTEKMIALLKNPNNILGIEYLKALALTKSKIQPYTITRKAAAYHSTELTLNITSATAIRNHLFNTGNLNEMIHAIPPSTYEILSTCFNKDGGPIFANDLGLTILSMIRRMTPQEIAKILDVGEGLENRIFQCANQSNRLDEFCQCVKSKRYTLTRIQRICMRILLDIQFPLMNQATHASTGLYGRILAFNDRGREIIKLAQKKSSFPFITKINQYTPPNSFTKNLLDLDIRATNLYALAVKNNAFSKGEQDHLTSPYYRKELT.

Residues 7-20 (ITEY…HLHH), Gly-102, Asn-174, and Arg-199 each bind ATP.

Belongs to the TmcAL family.

The protein resides in the cytoplasm. It carries out the reaction cytidine(34) in elongator tRNA(Met) + acetate + ATP = N(4)-acetylcytidine(34) in elongator tRNA(Met) + AMP + diphosphate. Its function is as follows. Catalyzes the formation of N(4)-acetylcytidine (ac(4)C) at the wobble position of elongator tRNA(Met), using acetate and ATP as substrates. First activates an acetate ion to form acetyladenylate (Ac-AMP) and then transfers the acetyl group to tRNA to form ac(4)C34. The chain is tRNA(Met) cytidine acetate ligase from Alkaliphilus metalliredigens (strain QYMF).